We begin with the raw amino-acid sequence, 391 residues long: MSGPVPSRARVYTDVNTHRPREYWDYESHVVEWGNQDDYQLVRKLGRGKYSEVFEAINITNNEKVVVKILKPVKKKKIKREIKILENLRGGPNIITLADIVKDPVSRTPALVFEHVNNTDFKQLYQTLTDYDIRFYMYEILKALDYCHSMGIMHRDVKPHNVMIDHEHRKLRLIDWGLAEFYHPGQEYNVRVASRYFKGPELLVDYQMYDYSLDMWRLGCMLASMIFRKEPFFHGRDNYDQLVRIAKFLGTEDLYGYIDKYNIELDPRFNDILGRHSRKRWERFVHSENQHLVSPEALDFLDKLLRYDHQSRLTAREAMEHPYFYTVVKDQARMGSSSMPGGSTPVSSANVMSGISSVPTPSPLGPLAGSPVIAAANPLGMPVPAATGAQQ.

Positions 39-324 (YQLVRKLGRG…AREAMEHPYF (286 aa)) constitute a Protein kinase domain. Residues 45-53 (LGRGKYSEV) and Lys-68 each bind ATP. The active-site Proton acceptor is the Asp-156.

The protein belongs to the protein kinase superfamily. Ser/Thr protein kinase family. CK2 subfamily. Heterotetramer composed of two catalytic subunits (alpha chain and/or alpha' chain) and two regulatory subunits (beta chains). Interacts with PML. As to expression, detected in blood platelets and megakaryocyte cell lines. Poorly expressed in lung. Highly expressed in lung tumor tissues.

It carries out the reaction L-seryl-[protein] + ATP = O-phospho-L-seryl-[protein] + ADP + H(+). The enzyme catalyses L-threonyl-[protein] + ATP = O-phospho-L-threonyl-[protein] + ADP + H(+). Probable catalytic subunit of a constitutively active serine/threonine-protein kinase complex that phosphorylates a large number of substrates containing acidic residues C-terminal to the phosphorylated serine or threonine. Amplification-dependent oncogene; promotes cell proliferation and tumorigenesis by down-regulating expression of the tumor suppressor protein, PML. May play a role in the pathogenesis of the lung cancer development and progression. The protein is Casein kinase II subunit alpha 3 (CSNK2A3) of Homo sapiens (Human).